Here is a 279-residue protein sequence, read N- to C-terminus: Tryptophan 2,3-dioxygenase (279 aa).

Residues 48 to 52, Tyr110, and Arg114 contribute to the substrate site; that span reads FIVIH. Position 237 (His237) interacts with heme. Thr251 provides a ligand contact to substrate.

Belongs to the tryptophan 2,3-dioxygenase family. In terms of assembly, homotetramer. Heme serves as cofactor.

It carries out the reaction L-tryptophan + O2 = N-formyl-L-kynurenine. It functions in the pathway amino-acid degradation; L-tryptophan degradation via kynurenine pathway; L-kynurenine from L-tryptophan: step 1/2. Functionally, heme-dependent dioxygenase that catalyzes the oxidative cleavage of the L-tryptophan (L-Trp) pyrrole ring and converts L-tryptophan to N-formyl-L-kynurenine. Catalyzes the oxidative cleavage of the indole moiety. The chain is Tryptophan 2,3-dioxygenase from Bacillus cereus (strain ZK / E33L).